The primary structure comprises 112 residues: Large ribosomal subunit protein P2 (112 aa).

The disordered stretch occupies residues 81–112 (VETAEAKKEDKKEEKKEEEEEEEDDLGFSLFG). The segment covering 84-95 (AEAKKEDKKEEK) has biased composition (basic and acidic residues). Residues 96–106 (KEEEEEEEDDL) show a composition bias toward acidic residues.

The protein belongs to the eukaryotic ribosomal protein P1/P2 family. In terms of assembly, P1 and P2 exist as dimers at the large ribosomal subunit. Phosphorylated.

In terms of biological role, plays an important role in the elongation step of protein synthesis. The sequence is that of Large ribosomal subunit protein P2 (MAL3P3.19) from Plasmodium falciparum (isolate 3D7).